The chain runs to 331 residues: Protein RecA (331 aa).

61–68 (GPESSGKT) lines the ATP pocket.

The protein belongs to the RecA family.

It is found in the cytoplasm. Functionally, can catalyze the hydrolysis of ATP in the presence of single-stranded DNA, the ATP-dependent uptake of single-stranded DNA by duplex DNA, and the ATP-dependent hybridization of homologous single-stranded DNAs. It interacts with LexA causing its activation and leading to its autocatalytic cleavage. In Mycoplasma mobile (strain ATCC 43663 / 163K / NCTC 11711) (Mesomycoplasma mobile), this protein is Protein RecA.